Here is a 946-residue protein sequence, read N- to C-terminus: Inositol-trisphosphate 3-kinase B (946 aa).

Disordered stretches follow at residues 19–128 (EMKS…EEAK), 156–288 (AQSS…TRSC), 308–472 (ARVT…GIPS), 486–561 (KDLK…RKAC), and 580–638 (GALE…HTLD). 3 positions are modified to phosphoserine: serine 43, serine 49, and serine 71. Residues 83 to 105 (NSSSGSGSGSSGSSVSSPSWAGR) are compositionally biased toward low complexity. 2 positions are modified to phosphoserine: serine 204 and serine 269. A compositionally biased stretch (polar residues) spans 396–411 (TTVSVQSAESSDSLSW). Positions 445 to 458 (GGSPTLGLLGGSPS) are enriched in low complexity. Residues 524-534 (TGVQSEGTWES) are compositionally biased toward polar residues. The span at 599–612 (SSSSASSTGFSSSY) shows a compositional bias: low complexity. Residues serine 679, lysine 690, 730-732 (DDL), and aspartate 743 each bind ATP. Substrate contacts are provided by lysine 745 and arginine 766. Positions 768-776 (DMYQKMIEV) are calmodulin-binding. 793-800 (KPRYMQWR) is a substrate binding site. Positions 817 and 897 each coordinate ATP. Lysine 900 is a binding site for substrate.

The protein belongs to the inositol phosphokinase (IPK) family. As to quaternary structure, interacts with DMTN.

The protein resides in the cytoplasm. It localises to the cytoskeleton. Its subcellular location is the endoplasmic reticulum. The catalysed reaction is 1D-myo-inositol 1,4,5-trisphosphate + ATP = 1D-myo-inositol 1,3,4,5-tetrakisphosphate + ADP + H(+). With respect to regulation, IP3K is activated by calcium and calmodulin. Form B is much more sensitive to calcium/calmodulin than form A. Functionally, catalyzes the phosphorylation of 1D-myo-inositol 1,4,5-trisphosphate (InsP3) into 1D-myo-inositol 1,3,4,5-tetrakisphosphate and participates to the regulation of calcium homeostasis. The sequence is that of Inositol-trisphosphate 3-kinase B from Homo sapiens (Human).